Reading from the N-terminus, the 564-residue chain is Proline--tRNA ligase (564 aa).

Belongs to the class-II aminoacyl-tRNA synthetase family. ProS type 1 subfamily. In terms of assembly, homodimer.

The protein resides in the cytoplasm. It catalyses the reaction tRNA(Pro) + L-proline + ATP = L-prolyl-tRNA(Pro) + AMP + diphosphate. Catalyzes the attachment of proline to tRNA(Pro) in a two-step reaction: proline is first activated by ATP to form Pro-AMP and then transferred to the acceptor end of tRNA(Pro). As ProRS can inadvertently accommodate and process non-cognate amino acids such as alanine and cysteine, to avoid such errors it has two additional distinct editing activities against alanine. One activity is designated as 'pretransfer' editing and involves the tRNA(Pro)-independent hydrolysis of activated Ala-AMP. The other activity is designated 'posttransfer' editing and involves deacylation of mischarged Ala-tRNA(Pro). The misacylated Cys-tRNA(Pro) is not edited by ProRS. The polypeptide is Proline--tRNA ligase (Coxiella burnetii (strain RSA 331 / Henzerling II)).